A 635-amino-acid chain; its full sequence is Probable extracellular metalloproteinase 1 (635 aa).

A signal peptide spans Met1–Ala19. Residues His20–His246 constitute a propeptide that is removed on maturation. N-linked (GlcNAc...) asparagine glycosylation is present at Asn287. Residue His430 participates in Zn(2+) binding. Glu431 is a catalytic residue. His434 contributes to the Zn(2+) binding site. Asn475, Asn594, and Asn623 each carry an N-linked (GlcNAc...) asparagine glycan.

Belongs to the peptidase M36 family. Zn(2+) serves as cofactor.

The protein resides in the secreted. Functionally, secreted metalloproteinase probably acting as a virulence factor. This is Probable extracellular metalloproteinase 1 (MEP1) from Trichophyton verrucosum (strain HKI 0517).